The chain runs to 130 residues: Small ribosomal subunit protein uS9 (130 aa).

The protein belongs to the universal ribosomal protein uS9 family.

The protein is Small ribosomal subunit protein uS9 of Streptococcus mutans serotype c (strain ATCC 700610 / UA159).